The following is a 216-amino-acid chain: Uracil-DNA glycosylase (216 aa).

The Proton acceptor role is filled by aspartate 59.

Belongs to the uracil-DNA glycosylase (UDG) superfamily. UNG family.

It localises to the cytoplasm. The catalysed reaction is Hydrolyzes single-stranded DNA or mismatched double-stranded DNA and polynucleotides, releasing free uracil.. In terms of biological role, excises uracil residues from the DNA which can arise as a result of misincorporation of dUMP residues by DNA polymerase or due to deamination of cytosine. The sequence is that of Uracil-DNA glycosylase from Staphylococcus epidermidis (strain ATCC 35984 / DSM 28319 / BCRC 17069 / CCUG 31568 / BM 3577 / RP62A).